We begin with the raw amino-acid sequence, 613 residues long: MFNMNVDESASGALGSSAIPVHPTPASVRLFEILQGKYAYVQGQTIYANLRNPGVFSRQVFTHLFKRAISHCTYDDVLHDWNKFEACIQKRWPSDDSCASRFRESTFESWSTTMKLTVRDLLTTNIYRVLHSRSVLSYERYVDWICATGMVPAVKKPITQELHSKIKSLRDRCVCRELGHERTIRSIGTELYEATREIIESLNSTFIPQFTEVTIEYLPRSDEYVAYYCGRRIRLHVLFPPAIFAGTVTFDSPVQRLYQNIFMCYRTLEHAKICQLLNTAPLKAIVGHGGRDMYKDILAHLEQNSQRKDPKKELLNLLVKLSENKTISGVTDVVEEFITDASNNLVDRNRLFGQPGETAAQGLKKKVSNTVVKCLTDQINEQFDQINGLEKERELYLKKIRSMESQLQASLGPGGNNPAASAPAAVAAEAASVDILTGSTASAIEKLFNSPSASLGARVSGHNESILNSFVSQYIPPSREMTKDLTELWESELFNTFKLTPVVDNQGQRLYVRYSSDTISILLGPFTYLVAELSPVELVTDVYATLGIVEIIDELYRSSRLAIYIEDLGRKYCPASATGGDHGIRQAPSARGDAEPDHAKSKPARDPPPGAGS.

The segment at 577 to 613 is disordered; the sequence is ATGGDHGIRQAPSARGDAEPDHAKSKPARDPPPGAGS. The segment covering 592 to 605 has biased composition (basic and acidic residues); it reads GDAEPDHAKSKPAR.

This sequence belongs to the herpesviridae portal protein family. Homododecamerizes. Interacts with terminase subunits TRM1 and TRM3.

The protein localises to the virion. The protein resides in the host nucleus. Its function is as follows. Forms a portal in the viral capsid through which viral DNA is translocated during DNA packaging. Assembles as a dodecamer at a single fivefold axe of the T=16 icosahedric capsid. Binds to the molecular motor that translocates the viral DNA, termed terminase. This chain is Portal protein, found in Homo sapiens (Human).